A 379-amino-acid chain; its full sequence is NAD-dependent protein deacetylase sirtuin-2 (379 aa).

Basic and acidic residues predominate over residues 1 to 10 (MSEEVSKRVE). The disordered stretch occupies residues 1–32 (MSEEVSKRVEEEADTPGLEGQSDDSSDEGDAS). A compositionally biased stretch (acidic residues) spans 21 to 32 (QSDDSSDEGDAS). A Deacetylase sirtuin-type domain is found at 55–335 (KVLDELTLDS…MTLAELLGWK (281 aa)). NAD(+)-binding positions include 83–87 (AGIST), 93–95 (DFR), and 165–168 (QNID). His-185 functions as the Proton acceptor in the catalytic mechanism. Zn(2+) is bound by residues Cys-193, Cys-198, Cys-219, and Cys-222. NAD(+) contacts are provided by residues 260–261 (TS), 284–286 (NME), and Cys-321. The span at 349-361 (IDSKDAKKTDKEA) shows a compositional bias: basic and acidic residues. The tract at residues 349–379 (IDSKDAKKTDKEASQSSKSAVAEAEKTDKTE) is disordered.

It belongs to the sirtuin family. Class I subfamily. It depends on Zn(2+) as a cofactor.

It localises to the cytoplasm. Its subcellular location is the nucleus. It carries out the reaction N(6)-acetyl-L-lysyl-[protein] + NAD(+) + H2O = 2''-O-acetyl-ADP-D-ribose + nicotinamide + L-lysyl-[protein]. The enzyme catalyses N(6)-tetradecanoyl-L-lysyl-[protein] + NAD(+) + H2O = 2''-O-tetradecanoyl-ADP-D-ribose + nicotinamide + L-lysyl-[protein]. The catalysed reaction is N(6)-hexadecanoyl-L-lysyl-[protein] + NAD(+) + H2O = 2''-O-hexadecanoyl-ADP-D-ribose + nicotinamide + L-lysyl-[protein]. Its function is as follows. NAD-dependent protein deacetylase, which deacetylates internal lysines on histone and alpha-tubulin as well as many other proteins such as key transcription factors. Participates in the modulation of multiple and diverse biological processes such as cell cycle control, genomic integrity, microtubule dynamics, cell differentiation, metabolic networks, and autophagy. Plays a major role in the control of cell cycle progression and genomic stability. Deacetylates histone H4 at 'Lys-16' (H4K16ac) at the VEGFA promoter. Thereby contributes to regulate expression of vegfa, a key regulator of angiogenesis. In addition to protein deacetylase activity, also has activity toward long-chain fatty acyl groups and mediates protein-lysine demyristoylation and depalmitoylation of target proteins. This Danio rerio (Zebrafish) protein is NAD-dependent protein deacetylase sirtuin-2 (sirt2).